We begin with the raw amino-acid sequence, 116 residues long: NADPH-dependent 7-cyano-7-deazaguanine reductase (116 aa).

The Thioimide intermediate role is filled by Cys-31. Asp-38 acts as the Proton donor in catalysis. Residues 53–55 and 72–73 contribute to the substrate site; these read VEL and YE.

Belongs to the GTP cyclohydrolase I family. QueF type 1 subfamily.

Its subcellular location is the cytoplasm. The enzyme catalyses 7-aminomethyl-7-carbaguanine + 2 NADP(+) = 7-cyano-7-deazaguanine + 2 NADPH + 3 H(+). It participates in tRNA modification; tRNA-queuosine biosynthesis. Functionally, catalyzes the NADPH-dependent reduction of 7-cyano-7-deazaguanine (preQ0) to 7-aminomethyl-7-deazaguanine (preQ1). In Chlorobium phaeobacteroides (strain DSM 266 / SMG 266 / 2430), this protein is NADPH-dependent 7-cyano-7-deazaguanine reductase.